The primary structure comprises 157 residues: Large ribosomal subunit protein eL24 (157 aa).

The tract at residues 95-157 is disordered; that stretch reads NQKPEVRKAQ…VSAPRVGGKR (63 aa). Basic and acidic residues predominate over residues 96-117; sequence QKPEVRKAQREQAIRAAKEAKK. Residues 123–145 are compositionally biased toward low complexity; that stretch reads KKQTTQSSKAPAKSAQKQKIAKP.

The protein belongs to the eukaryotic ribosomal protein eL24 family. As to quaternary structure, component of the large ribosomal subunit.

The protein resides in the cytoplasm. Its function is as follows. Component of the large ribosomal subunit. The ribosome is a large ribonucleoprotein complex responsible for the synthesis of proteins in the cell. Plays an essential role in early embryonic development. The protein is Large ribosomal subunit protein eL24 (rpl24) of Danio rerio (Zebrafish).